We begin with the raw amino-acid sequence, 369 residues long: Geranylgeranyl pyrophosphate synthase, chloroplastic (369 aa).

Positions 118, 121, and 150 each coordinate isopentenyl diphosphate. Residues D157 and D163 each coordinate Mg(2+). R168 is a binding site for dimethylallyl diphosphate. Residue R169 participates in isopentenyl diphosphate binding. 5 residues coordinate dimethylallyl diphosphate: K254, T255, Q292, K309, and K319.

This sequence belongs to the FPP/GGPP synthase family. As to quaternary structure, monomer. It depends on Mg(2+) as a cofactor.

It is found in the plastid. The protein resides in the chloroplast. It catalyses the reaction isopentenyl diphosphate + dimethylallyl diphosphate = (2E)-geranyl diphosphate + diphosphate. The catalysed reaction is isopentenyl diphosphate + (2E)-geranyl diphosphate = (2E,6E)-farnesyl diphosphate + diphosphate. It carries out the reaction isopentenyl diphosphate + (2E,6E)-farnesyl diphosphate = (2E,6E,10E)-geranylgeranyl diphosphate + diphosphate. The protein operates within isoprenoid biosynthesis; farnesyl diphosphate biosynthesis; farnesyl diphosphate from geranyl diphosphate and isopentenyl diphosphate: step 1/1. It participates in isoprenoid biosynthesis; geranyl diphosphate biosynthesis; geranyl diphosphate from dimethylallyl diphosphate and isopentenyl diphosphate: step 1/1. Its pathway is isoprenoid biosynthesis; geranylgeranyl diphosphate biosynthesis; geranylgeranyl diphosphate from farnesyl diphosphate and isopentenyl diphosphate: step 1/1. Functionally, catalyzes the trans-addition of the three molecules of IPP onto DMAPP to form geranylgeranyl pyrophosphate. The protein is Geranylgeranyl pyrophosphate synthase, chloroplastic of Capsicum annuum (Capsicum pepper).